We begin with the raw amino-acid sequence, 101 residues long: Small ribosomal subunit protein uS14 (101 aa).

This sequence belongs to the universal ribosomal protein uS14 family. As to quaternary structure, part of the 30S ribosomal subunit. Contacts proteins S3 and S10.

Binds 16S rRNA, required for the assembly of 30S particles and may also be responsible for determining the conformation of the 16S rRNA at the A site. In Hyphomonas neptunium (strain ATCC 15444), this protein is Small ribosomal subunit protein uS14.